Here is a 595-residue protein sequence, read N- to C-terminus: L-fucose isomerase (595 aa).

Residues Glu341 and Asp365 each act as proton acceptor in the active site. Mn(2+)-binding residues include Glu341, Asp365, and His531.

This sequence belongs to the L-fucose isomerase family. Mn(2+) is required as a cofactor.

Its subcellular location is the cytoplasm. It carries out the reaction L-fucose = L-fuculose. Its pathway is carbohydrate degradation; L-fucose degradation; L-lactaldehyde and glycerone phosphate from L-fucose: step 1/3. Converts the aldose L-fucose into the corresponding ketose L-fuculose. The protein is L-fucose isomerase of Clostridium perfringens (strain 13 / Type A).